Consider the following 264-residue polypeptide: Phosphonoacetaldehyde hydrolase (264 aa).

Catalysis depends on Asp9, which acts as the Nucleophile. Asp9 and Ala11 together coordinate Mg(2+). Lys50 (schiff-base intermediate with substrate) is an active-site residue. Mg(2+) is bound at residue Asp183.

The protein belongs to the HAD-like hydrolase superfamily. PhnX family. As to quaternary structure, homodimer. The cofactor is Mg(2+).

It carries out the reaction phosphonoacetaldehyde + H2O = acetaldehyde + phosphate + H(+). Involved in phosphonate degradation. This is Phosphonoacetaldehyde hydrolase from Bacillus cereus (strain B4264).